The sequence spans 522 residues: Putative ribose/galactose/methyl galactoside import ATP-binding protein (522 aa).

2 consecutive ABC transporter domains span residues 7–244 and 254–498; these read LEMV…VGRE and PKLG…TGQA. Residue 39-46 participates in ATP binding; it reads GENGAGKS.

It belongs to the ABC transporter superfamily. Carbohydrate importer 2 (CUT2) (TC 3.A.1.2) family.

Its subcellular location is the cell membrane. The enzyme catalyses D-ribose(out) + ATP + H2O = D-ribose(in) + ADP + phosphate + H(+). It carries out the reaction D-galactose(out) + ATP + H2O = D-galactose(in) + ADP + phosphate + H(+). In terms of biological role, part of an ABC transporter complex involved in carbohydrate import. Could be involved in ribose, galactose and/or methyl galactoside import. Responsible for energy coupling to the transport system. In Halalkalibacterium halodurans (strain ATCC BAA-125 / DSM 18197 / FERM 7344 / JCM 9153 / C-125) (Bacillus halodurans), this protein is Putative ribose/galactose/methyl galactoside import ATP-binding protein.